A 476-amino-acid chain; its full sequence is Ribulose bisphosphate carboxylase large chain (476 aa).

The propeptide occupies 1–2 (MS). P3 is modified (N-acetylproline). Residue K14 is modified to N6,N6,N6-trimethyllysine. 2 residues coordinate substrate: N123 and T173. The active-site Proton acceptor is the K175. Substrate is bound at residue K177. Mg(2+) contacts are provided by K201, D203, and E204. An N6-carboxylysine modification is found at K201. H294 serves as the catalytic Proton acceptor. Positions 295, 327, and 379 each coordinate substrate.

Belongs to the RuBisCO large chain family. Type I subfamily. Heterohexadecamer of 8 large chains and 8 small chains; disulfide-linked. The disulfide link is formed within the large subunit homodimers. The cofactor is Mg(2+). The disulfide bond which can form in the large chain dimeric partners within the hexadecamer appears to be associated with oxidative stress and protein turnover.

The protein localises to the plastid. Its subcellular location is the chloroplast. The enzyme catalyses 2 (2R)-3-phosphoglycerate + 2 H(+) = D-ribulose 1,5-bisphosphate + CO2 + H2O. It carries out the reaction D-ribulose 1,5-bisphosphate + O2 = 2-phosphoglycolate + (2R)-3-phosphoglycerate + 2 H(+). In terms of biological role, ruBisCO catalyzes two reactions: the carboxylation of D-ribulose 1,5-bisphosphate, the primary event in carbon dioxide fixation, as well as the oxidative fragmentation of the pentose substrate in the photorespiration process. Both reactions occur simultaneously and in competition at the same active site. This is Ribulose bisphosphate carboxylase large chain from Sorghum bicolor (Sorghum).